We begin with the raw amino-acid sequence, 1202 residues long: MAGPSRRRRRLHLSKIYSYTCGKSSFQEDHSNIGGPGFSRVVYCNEPGSPAAERRNYAGNYVRSTKYTVASFFPKSLFEQFRRVANFYFLVTGILSLTDLSPYGAVSALLPLALVISATMVKEGIEDWRRKQQDIEVNNRKVKVHDGNGIFRQEEWRNLRVGDIVRVEKDEFFPADLLLLSSSYEDSVCYVETMNLDGETNLKVKQGLEATSSLLNQDSDFKDFRGVVRCEDPNVNLYVFVGTLALEEERFPLSIQQILLRDSKLRNTEYVYGAVVFTGHDTKVIQNSTDPPSKRSRIERTMDKIIYLMFGLVFLMSFVGSIIFGVETREDKVKNGRTERWYLKPDDADIFFDPERAPMAAIYHFFTATMLYSYFIPISLYVSIEIVKVLQSIFINRDIHMYYEETDKPAQARTSNLNEELGMVDTILSDKTGTLTCNSMEFIKCSIAGKAYGRGITEVERAMAVRSGGSPLVNEDLDVVVDQSGPKVKGFNFEDERVMNGNWVRQPEAAVLQKFFRLLAVCHTAIPETDEESGNVSYEAESPDEAAFVVAAREFGFEFFNRTQNGISFRELDLVSGEKVERVYRLLNVLEFNSTRKRMSVIVRDDDGKLLLLSKGADNVMFERLAKNGRQFEAKTQEHVNQYADAGLRTLVLAYREVDENEYIEFNKSFNEAKASVSEDREALIDEITDKMERDLILLGATAVEDKLQNGVPECIDKLAQAGIKIWVLTGDKMETAINIGFASSLLRQEMKQIIINLETPQIKSLEKSGGKDEIELASRESVVMQLQEGKALLAASGASSEAFALIIDGKSLTYALEDEIKKMFLDLATSCASVICCRSSPKQKALVTRLVKSGTGKTTLAIGDGANDVGMLQEADIGVGISGVEGMQAVMSSDIAIAQFRYLERLLLVHGHWCYSRIASMICYFFYKNITFGVTVFLYEAYTSFSGQPAYNDWFLSLFNVFFSSLPVIALGVFDQDVSARFCYKFPLLYQEGVQNILFSWKRIIGWMFNGFISALAIFFLCKESLKHQLFDPDGKTAGREILGGTMYTCVVWVVNLQMALSISYFTWVQHIVIWGSIAFWYIFLMIYGAMTPSFSTDAYMVFLEALAPAPSYWLTTLFVMIFALIPYFVYKSVQMRFFPKYHQMIQWIRYEGHSNDPEFVEMVRQRSIRPTTVGYTARRAASVRRSARFHDQIYKDLVGV.

The Cytoplasmic segment spans residues 1-73 (MAGPSRRRRR…STKYTVASFF (73 aa)). Residues 74-95 (PKSLFEQFRRVANFYFLVTGIL) form a helical membrane-spanning segment. At 96–99 (SLTD) the chain is on the extracellular side. Residues 100 to 122 (LSPYGAVSALLPLALVISATMVK) form a helical membrane-spanning segment. Residues 123–305 (EGIEDWRRKQ…SRIERTMDKI (183 aa)) are Cytoplasmic-facing. The helical transmembrane segment at 306–327 (IYLMFGLVFLMSFVGSIIFGVE) threads the bilayer. Residues 328–364 (TREDKVKNGRTERWYLKPDDADIFFDPERAPMAAIYH) are Extracellular-facing. The chain crosses the membrane as a helical span at residues 365–382 (FFTATMLYSYFIPISLYV). The Cytoplasmic segment spans residues 383-920 (SIEIVKVLQS…HGHWCYSRIA (538 aa)). Aspartate 430 acts as the 4-aspartylphosphate intermediate in catalysis. Mg(2+) is bound by residues aspartate 865 and aspartate 869. The helical transmembrane segment at 921–940 (SMICYFFYKNITFGVTVFLY) threads the bilayer. Over 941-954 (EAYTSFSGQPAYND) the chain is Extracellular. The chain crosses the membrane as a helical span at residues 955–974 (WFLSLFNVFFSSLPVIALGV). Residues 975 to 1004 (FDQDVSARFCYKFPLLYQEGVQNILFSWKR) lie on the Cytoplasmic side of the membrane. The chain crosses the membrane as a helical span at residues 1005 to 1027 (IIGWMFNGFISALAIFFLCKESL). At 1028–1040 (KHQLFDPDGKTAG) the chain is on the extracellular side. Residues 1041–1063 (REILGGTMYTCVVWVVNLQMALS) form a helical membrane-spanning segment. At 1064–1069 (ISYFTW) the chain is on the cytoplasmic side. The chain crosses the membrane as a helical span at residues 1070-1090 (VQHIVIWGSIAFWYIFLMIYG). At 1091-1107 (AMTPSFSTDAYMVFLEA) the chain is on the extracellular side. The helical transmembrane segment at 1108 to 1132 (LAPAPSYWLTTLFVMIFALIPYFVY) threads the bilayer. Residues 1133 to 1202 (KSVQMRFFPK…DQIYKDLVGV (70 aa)) lie on the Cytoplasmic side of the membrane.

The protein belongs to the cation transport ATPase (P-type) (TC 3.A.3) family. Type IV subfamily.

The protein resides in the cell membrane. The enzyme catalyses ATP + H2O + phospholipidSide 1 = ADP + phosphate + phospholipidSide 2.. In terms of biological role, involved in transport of phospholipids. The protein is Phospholipid-transporting ATPase 10 of Arabidopsis thaliana (Mouse-ear cress).